A 711-amino-acid polypeptide reads, in one-letter code: 1,4-alpha-glucan-branching enzyme (711 aa).

Positions 98 and 135 each coordinate (1,4-alpha-D-glucosyl)n. The active-site Nucleophile is Asp353. Glu414 functions as the Proton donor in the catalytic mechanism.

The protein belongs to the glycosyl hydrolase 13 family. GlgB subfamily.

The protein localises to the cytoplasm. It carries out the reaction Transfers a segment of a (1-&gt;4)-alpha-D-glucan chain to a primary hydroxy group in a similar glucan chain.. It participates in glycan biosynthesis; glycogen biosynthesis. Its function is as follows. Glycogen-branching enzyme participates in the glycogen biosynthetic process along with glycogenin and glycogen synthase. Generates alpha-1,6-glucosidic branches from alpha-1,4-linked glucose chains, to increase solubility of the glycogen polymer. This is 1,4-alpha-glucan-branching enzyme (GLC3) from Debaryomyces hansenii (strain ATCC 36239 / CBS 767 / BCRC 21394 / JCM 1990 / NBRC 0083 / IGC 2968) (Yeast).